The chain runs to 1368 residues: MHYSFTEKKRIRKSFAKRANVHNVPFLLATQLESYHDFLQEDKIPSQRKNEGLQSAFTSIFPIVSHNGFARLEFLSYVLGDPPFNIKECQQRGLTYASPLRAKVRLVILDKESPTKPVVKEMKEQEVYMGELPLMTSTGSFVINGTERVIVSQLHRSPGVFFEHDRGKTHSSGKLLFSARIIPYRGSWLDYEFDPKDILFFRVDRRRKMPVTILLKAIGMTPEQILENFFVFDDFTLHADGAEMKFVAERLRGEVARFDITDKAGKVLVAKDKRINSKHVRDVEAAGIKQISVPEDYLLGRILAKNIVDADTGEVIASANDELTDDLLARLREGKISHIQTLYTNDLDQGGYISQTLRMDDTNDQMAAKVAIYRMMRPGEPPTEDSVEALFNGLFYNPDRYDLSAVGRMKFNRRIGRDSLTGDMTLSNEDVLAVIKILVELRNGRGEVDDIDHLGNRRVRCVGELAENQFRAGLVRVERAVKERLGQAEADNLMPHDLINSKPISAAIREFFGSSQLSQFMDQTNPLSEITHKRRVSALGPGGLTRERAGFEVRDVHPTHYGRVCPIETPEGPNIGLINSLALYARLNEYGFLETPYRKVEGSKVTDQIDYLSAIEEGRYIIAQANATIDKAGMLSDELVSAREAGETILVSPERVQYMDVAPGQVVSVAASLIPFLEHDDANRALMGANMQRQAVPCLRPEKALVGTGIERTVAVDSGTTVQALRGGIVDYIDAGRVVIRVNDDEAQAGEVGVDIYNLIKYTRSNQNTNINQRPIVQVGDRVAKHDVIADGASTDLGELALGQNMLVAFMPWNGYNFEDSILISEKVVADDRYTSIHIEELSVVARDTKLGAEEITRDISNLAENQLARLDESGIVYIGAEVTAGDTLVGKVTPKGETQLTPEEKLLRAIFGEKASDVKDTSLRVPSGMVGTVIDVQVFTREGIPRDKRAQQIIDDELQRYRLDLNDQLRIVEGDAFQRLEKMLVGKVVNGGPKKIAKGTKITAEYLADLDKYHWFDIRPSDDTSANALEAIKESIAEKRHQFDLAFEEKRKKLTQGDELPPGVQKMVKVYLAVKRRLQPGDKMAGRHGNKGVVSRILPIEDMPHMADGTPADVVLNPLGVPSRMNVGQVLEVHLGWAAKGLGLRIGEMLNTQVQIAELRKFLAAIYNESGKTEDLDSFSDAEILELASNLKNGVPFATPVFDGADEGETRRMLDLAYPDHIAKQLGMTASKNQVTMYDGRTGEAFERTVTVGYMHYLKLHHLVDDKMHARSTGPYSLVTQQPLGGKAQFGGQRFGEMEVWALEAYGASYVLQEMLTVKSDDVNGRTKVYENLVKGDHVIDAGMPESFNVLVKEIRSLGIDIDLERD.

Belongs to the RNA polymerase beta chain family. The RNAP catalytic core consists of 2 alpha, 1 beta, 1 beta' and 1 omega subunit. When a sigma factor is associated with the core the holoenzyme is formed, which can initiate transcription.

The catalysed reaction is RNA(n) + a ribonucleoside 5'-triphosphate = RNA(n+1) + diphosphate. DNA-dependent RNA polymerase catalyzes the transcription of DNA into RNA using the four ribonucleoside triphosphates as substrates. This Herminiimonas arsenicoxydans protein is DNA-directed RNA polymerase subunit beta.